The sequence spans 500 residues: NAD(P)H-quinone oxidoreductase chain 4, chloroplastic (500 aa).

The next 14 membrane-spanning stretches (helical) occupy residues Phe-4 to Leu-24, Tyr-35 to Phe-55, Ile-87 to Val-107, Phe-113 to Ser-130, Leu-134 to Met-154, Phe-167 to Leu-187, Ile-211 to His-231, His-242 to Val-262, Ala-272 to Ala-292, Ile-305 to Asp-325, Gly-330 to Gly-350, Leu-386 to Thr-406, Ile-416 to Met-436, and Leu-462 to Val-482.

The protein belongs to the complex I subunit 4 family.

The protein resides in the plastid. Its subcellular location is the chloroplast thylakoid membrane. The enzyme catalyses a plastoquinone + NADH + (n+1) H(+)(in) = a plastoquinol + NAD(+) + n H(+)(out). The catalysed reaction is a plastoquinone + NADPH + (n+1) H(+)(in) = a plastoquinol + NADP(+) + n H(+)(out). This chain is NAD(P)H-quinone oxidoreductase chain 4, chloroplastic (ndhD), found in Arabidopsis thaliana (Mouse-ear cress).